A 406-amino-acid polypeptide reads, in one-letter code: Phosphatidylserine decarboxylase proenzyme, mitochondrial (406 aa).

The N-terminal 49 residues, M1–K49, are a transit peptide targeting the mitochondrion. The Mitochondrial matrix segment spans residues V50–L60. A helical transmembrane segment spans residues L61–Q79. Over Y80–L406 the chain is Mitochondrial intermembrane. Residues D188, H264, and S375 each act as charge relay system; for autoendoproteolytic cleavage activity in the active site. S375 (schiff-base intermediate with substrate; via pyruvic acid; for decarboxylase activity) is an active-site residue. Pyruvic acid (Ser); by autocatalysis is present on S375.

It belongs to the phosphatidylserine decarboxylase family. PSD-B subfamily. Eukaryotic type I sub-subfamily. Heterodimer of a large membrane-associated beta subunit and a small pyruvoyl-containing alpha subunit. Pyruvate serves as cofactor. In terms of processing, is synthesized initially as an inactive proenzyme. Formation of the active enzyme involves a self-maturation process in which the active site pyruvoyl group is generated from an internal serine residue via an autocatalytic post-translational modification. Two non-identical subunits are generated from the proenzyme in this reaction, and the pyruvate is formed at the N-terminus of the alpha chain, which is derived from the carboxyl end of the proenzyme. The autoendoproteolytic cleavage occurs by a canonical serine protease mechanism, in which the side chain hydroxyl group of the serine supplies its oxygen atom to form the C-terminus of the beta chain, while the remainder of the serine residue undergoes an oxidative deamination to produce ammonia and the pyruvoyl prosthetic group on the alpha chain. During this reaction, the Ser that is part of the protease active site of the proenzyme becomes the pyruvoyl prosthetic group, which constitutes an essential element of the active site of the mature decarboxylase.

The protein localises to the mitochondrion inner membrane. Its subcellular location is the cytoplasm. It is found in the lipid droplet. The enzyme catalyses a 1,2-diacyl-sn-glycero-3-phospho-L-serine + H(+) = a 1,2-diacyl-sn-glycero-3-phosphoethanolamine + CO2. It participates in phospholipid metabolism; phosphatidylethanolamine biosynthesis. With respect to regulation, inhibited by hydroxylamine. Catalyzes the formation of phosphatidylethanolamine (PtdEtn) from phosphatidylserine (PtdSer). Plays a central role in phospholipid metabolism and in the interorganelle trafficking of phosphatidylserine. May be involved in lipid droplet biogenesis at the endoplasmic reticulum membrane. The protein is Phosphatidylserine decarboxylase proenzyme, mitochondrial of Rattus norvegicus (Rat).